We begin with the raw amino-acid sequence, 390 residues long: LL-diaminopimelate aminotransferase 2 (390 aa).

Tyr13 and Gly38 together coordinate substrate. Pyridoxal 5'-phosphate-binding positions include Tyr67, 102–103 (SK), Tyr127, Asn177, Tyr208, and 236–238 (SLS). Residues Lys103, Tyr127, and Asn177 each contribute to the substrate site. The residue at position 239 (Lys239) is an N6-(pyridoxal phosphate)lysine. Arg247 provides a ligand contact to pyridoxal 5'-phosphate. A substrate-binding site is contributed by Arg365.

This sequence belongs to the class-I pyridoxal-phosphate-dependent aminotransferase family. LL-diaminopimelate aminotransferase subfamily. As to quaternary structure, homodimer. It depends on pyridoxal 5'-phosphate as a cofactor.

It catalyses the reaction (2S,6S)-2,6-diaminopimelate + 2-oxoglutarate = (S)-2,3,4,5-tetrahydrodipicolinate + L-glutamate + H2O + H(+). It participates in amino-acid biosynthesis; L-lysine biosynthesis via DAP pathway; LL-2,6-diaminopimelate from (S)-tetrahydrodipicolinate (aminotransferase route): step 1/1. Involved in the synthesis of meso-diaminopimelate (m-DAP or DL-DAP), required for both lysine and peptidoglycan biosynthesis. Catalyzes the direct conversion of tetrahydrodipicolinate to LL-diaminopimelate. The protein is LL-diaminopimelate aminotransferase 2 of Trichormus variabilis (strain ATCC 29413 / PCC 7937) (Anabaena variabilis).